The following is a 315-amino-acid chain: N-acetyl-gamma-glutamyl-phosphate reductase (315 aa).

C117 is an active-site residue.

The protein belongs to the NAGSA dehydrogenase family. Type 2 subfamily.

Its subcellular location is the cytoplasm. It catalyses the reaction N-acetyl-L-glutamate 5-semialdehyde + phosphate + NADP(+) = N-acetyl-L-glutamyl 5-phosphate + NADPH + H(+). It functions in the pathway amino-acid biosynthesis; L-arginine biosynthesis; N(2)-acetyl-L-ornithine from L-glutamate: step 3/4. In terms of biological role, catalyzes the NADPH-dependent reduction of N-acetyl-5-glutamyl phosphate to yield N-acetyl-L-glutamate 5-semialdehyde. The sequence is that of N-acetyl-gamma-glutamyl-phosphate reductase from Burkholderia lata (strain ATCC 17760 / DSM 23089 / LMG 22485 / NCIMB 9086 / R18194 / 383).